The sequence spans 135 residues: Large ribosomal subunit protein uL16c (135 aa).

It belongs to the universal ribosomal protein uL16 family. As to quaternary structure, part of the 50S ribosomal subunit.

It localises to the plastid. The protein localises to the chloroplast. This chain is Large ribosomal subunit protein uL16c, found in Lepidium virginicum (Virginia pepperweed).